A 114-amino-acid polypeptide reads, in one-letter code: TYRO protein tyrosine kinase-binding protein (114 aa).

Positions 1-27 (MGAPEPSWCFLFLPVLLTVGGLSPVQA) are cleaved as a signal peptide. The Extracellular segment spans residues 28–42 (QSDNYPGCECSSVSP). The chain crosses the membrane as a helical span at residues 43–63 (GVLAGIVLGDLVLTLLIALAV). Ca(2+) is bound at residue Asp-52. The Cytoplasmic segment spans residues 64-114 (YSLGRLVSRGRGTADGTRKQHMAETESPYQELQGQRPEVYSDLNTQRQYYR). The interval 72–114 (RGRGTADGTRKQHMAETESPYQELQGQRPEVYSDLNTQRQYYR) is disordered. In terms of domain architecture, ITAM spans 81–109 (RKQHMAETESPYQELQGQRPEVYSDLNTQ). Tyr-92 and Tyr-103 each carry phosphotyrosine. Polar residues predominate over residues 105–114 (DLNTQRQYYR).

It belongs to the TYROBP family. Homodimer; disulfide-linked. Homotrimer; disulfide-linked. Homotetramer; disulfide-linked. Homotrimers and homotetramers form when low levels of partner receptors are available and is competitive with assembly with interacting receptors. They may represent alternative oligomerization states or may be intermediates in the receptor assembly process. Binding of a metal cation aids in homooligomerization through coordination of the metal ion by the subunits of the oligomer. Interacts with TREM1. Interacts with TREM2. Interacts with CLECSF5. Interacts with CD300LB and CD300C2. Interacts with CD300E. Interacts (via ITAM domain) with SYK (via SH2 domains); activates SYK mediating neutrophils and macrophages integrin-mediated activation. Interacts with KLRC2. Interacts with CD300H. Interacts with KLRD1. Interacts with SIGLEC1. Post-translationally, following ligand binding by associated receptors, tyrosine phosphorylated in the ITAM domain which leads to activation of additional tyrosine kinases and subsequent cell activation.

The protein resides in the cell membrane. In terms of biological role, adapter protein which non-covalently associates with activating receptors found on the surface of a variety of immune cells to mediate signaling and cell activation following ligand binding by the receptors. TYROBP is tyrosine-phosphorylated in the ITAM domain following ligand binding by the associated receptors which leads to activation of additional tyrosine kinases and subsequent cell activation. Also has an inhibitory role in some cells. Non-covalently associates with activating receptors of the CD300 family to mediate cell activation. Also mediates cell activation through association with activating receptors of the CD200R family. Required for neutrophil activation mediated by integrin. Required for the activation of myeloid cells mediated by the CLEC5A/MDL1 receptor. Associates with natural killer (NK) cell receptors such as the KLRD1/KLRC2 heterodimer to mediate NK cell activation. Associates with TREM1 to mediate activation of neutrophils and monocytes. Associates with TREM2 on monocyte-derived dendritic cells to mediate up-regulation of chemokine receptor CCR7 and dendritic cell maturation and survival. PAssociation with TREM2 mediates cytokine-induced formation of multinucleated giant cells which are formed by the fusion of macrophages. Stabilizes the TREM2 C-terminal fragment (TREM2-CTF) produced by TREM2 ectodomain shedding which suppresses the release of pro-inflammatory cytokines. In microglia, required with TREM2 for phagocytosis of apoptotic neurons. Required with ITGAM/CD11B in microglia to control production of microglial superoxide ions which promote the neuronal apoptosis that occurs during brain development. Promotes pro-inflammatory responses in microglia following nerve injury which accelerates degeneration of injured neurons. ositively regulates the expression of the IRAK3/IRAK-M kinase and IL10 production by liver dendritic cells and inhibits their T cell allosimulatory ability. Negatively regulates B cell proliferation. Required for CSF1-mediated osteoclast cytoskeletal organization. Positively regulates multinucleation during osteoclast development. The sequence is that of TYRO protein tyrosine kinase-binding protein from Rattus norvegicus (Rat).